Reading from the N-terminus, the 113-residue chain is Large ribosomal subunit protein eL36z (113 aa).

Positions 78–88 (RKLGTHKRAKR) are enriched in basic residues. Residues 78 to 113 (RKLGTHKRAKRKREEMSSVLRKMRSLGGAAAAEKKM) are disordered.

Belongs to the eukaryotic ribosomal protein eL36 family.

This chain is Large ribosomal subunit protein eL36z (RPL36A), found in Arabidopsis thaliana (Mouse-ear cress).